The sequence spans 786 residues: LPS-assembly protein LptD (786 aa).

An N-terminal signal peptide occupies residues 1-39 (MPPKPLFPNVFPGDGAPRKRRLALALLAVPGLVPAVSYA).

This sequence belongs to the LptD family. As to quaternary structure, component of the lipopolysaccharide transport and assembly complex. Interacts with LptE and LptA.

The protein localises to the cell outer membrane. Together with LptE, is involved in the assembly of lipopolysaccharide (LPS) at the surface of the outer membrane. The sequence is that of LPS-assembly protein LptD from Burkholderia ambifaria (strain ATCC BAA-244 / DSM 16087 / CCUG 44356 / LMG 19182 / AMMD) (Burkholderia cepacia (strain AMMD)).